The primary structure comprises 475 residues: MSPKTETKASVGFKAGVKDYRLTYYTPEYQTKDTDILAAFRVTPQPGVPAEEAGAAVAAESSTGTWTTVWTDGLTSLDRYKGRCYDIEPVPGEENQFIAYVAYPLDLFEEGSVTNLFTSIVGNVFGFKALRALRLEDLRIPPAYSKTFQGPPHGIQVERDKLNKYGRPLLGCTIKPKLGLSAKNYGRAVYECLRGGLDFTKDDENVNSQPFMRWRDRFVFCAEAINKAQAETGEIKGHYLNATAGTCEEMMKRAVFARELGVPIVMHDYLTGGFTANTSLAHYCRDNGLLLHIHRAMHAVIDRQRNHGMHFRVLAKALRMSGGDHIHAGTVVGKLEGERDVTLGFVDLLRDDFIEKDRSRGIYFTQDWVSMPGVLPVASGGIHVWHMPALTEIFGDDSVLQFGGGTLGHPWGNAPGAVANRVALEACVQARNEGRDLAREGNEVIREACKWSPELAAACEIWKEIKFEFDVIDRL.

A propeptide spanning residues 1 to 2 (MS) is cleaved from the precursor. The residue at position 3 (Pro3) is an N-acetylproline. Lys14 is subject to N6,N6,N6-trimethyllysine. Positions 123 and 173 each coordinate substrate. Lys175 serves as the catalytic Proton acceptor. Lys177 serves as a coordination point for substrate. Residues Lys201, Asp203, and Glu204 each coordinate Mg(2+). An N6-carboxylysine modification is found at Lys201. Residue His294 is the Proton acceptor of the active site. The substrate site is built by Arg295, His327, and Ser379.

The protein belongs to the RuBisCO large chain family. Type I subfamily. In terms of assembly, heterohexadecamer of 8 large chains and 8 small chains; disulfide-linked. The disulfide link is formed within the large subunit homodimers. Mg(2+) is required as a cofactor. Post-translationally, the disulfide bond which can form in the large chain dimeric partners within the hexadecamer appears to be associated with oxidative stress and protein turnover.

The protein resides in the plastid. The protein localises to the chloroplast. The enzyme catalyses 2 (2R)-3-phosphoglycerate + 2 H(+) = D-ribulose 1,5-bisphosphate + CO2 + H2O. It carries out the reaction D-ribulose 1,5-bisphosphate + O2 = 2-phosphoglycolate + (2R)-3-phosphoglycerate + 2 H(+). RuBisCO catalyzes two reactions: the carboxylation of D-ribulose 1,5-bisphosphate, the primary event in carbon dioxide fixation, as well as the oxidative fragmentation of the pentose substrate in the photorespiration process. Both reactions occur simultaneously and in competition at the same active site. In Pinus balfouriana (Foxtail pine), this protein is Ribulose bisphosphate carboxylase large chain.